The chain runs to 86 residues: Small ribosomal subunit protein uS15 (86 aa).

The segment at 1-22 is disordered; the sequence is MSIDTQKVIEDNKRSSADTGSP. The span at 7–16 shows a compositional bias: basic and acidic residues; the sequence is KVIEDNKRSS.

This sequence belongs to the universal ribosomal protein uS15 family. Part of the 30S ribosomal subunit. Forms a bridge to the 50S subunit in the 70S ribosome, contacting the 23S rRNA.

One of the primary rRNA binding proteins, it binds directly to 16S rRNA where it helps nucleate assembly of the platform of the 30S subunit by binding and bridging several RNA helices of the 16S rRNA. Its function is as follows. Forms an intersubunit bridge (bridge B4) with the 23S rRNA of the 50S subunit in the ribosome. This is Small ribosomal subunit protein uS15 from Stenotrophomonas maltophilia (strain R551-3).